The sequence spans 205 residues: Tumor suppressor candidate gene 1 protein homolog (205 aa).

A compositionally biased stretch (low complexity) spans 1–12 (MWRMRGGATRRG). The disordered stretch occupies residues 1–49 (MWRMRGGATRRGSCGGEGGGSRGESGRLGRAREGGGGGGGVGWRGRAGG). Over residues 13-23 (SCGGEGGGSRG) the composition is skewed to gly residues. A compositionally biased stretch (basic and acidic residues) spans 24 to 33 (ESGRLGRARE). The segment covering 34 to 48 (GGGGGGGVGWRGRAG) has biased composition (gly residues). A coiled-coil region spans residues 66-110 (LEALRARDERDRQNARLREENARLRLENRRLRRENRSLFRQALRL). 2 disordered regions span residues 113–149 (DSGE…SPRA) and 174–205 (GARP…RPWL). Ser-146 carries the phosphoserine modification. Over residues 196–205 (HDPDVPRPWL) the composition is skewed to basic and acidic residues.

The protein is Tumor suppressor candidate gene 1 protein homolog (Tusc1) of Mus musculus (Mouse).